A 185-amino-acid chain; its full sequence is Protein GrpE (185 aa).

The tract at residues 1 to 37 is disordered; it reads MEEQEEKQYNQNIQDNEEGTQMREELQESTSAQQTLQ. Residues 28–37 show a composition bias toward polar residues; that stretch reads ESTSAQQTLQ.

This sequence belongs to the GrpE family. As to quaternary structure, homodimer.

The protein localises to the cytoplasm. Its function is as follows. Participates actively in the response to hyperosmotic and heat shock by preventing the aggregation of stress-denatured proteins, in association with DnaK and GrpE. It is the nucleotide exchange factor for DnaK and may function as a thermosensor. Unfolded proteins bind initially to DnaJ; upon interaction with the DnaJ-bound protein, DnaK hydrolyzes its bound ATP, resulting in the formation of a stable complex. GrpE releases ADP from DnaK; ATP binding to DnaK triggers the release of the substrate protein, thus completing the reaction cycle. Several rounds of ATP-dependent interactions between DnaJ, DnaK and GrpE are required for fully efficient folding. The polypeptide is Protein GrpE (Helicobacter hepaticus (strain ATCC 51449 / 3B1)).